A 433-amino-acid chain; its full sequence is Adenylosuccinate synthetase (433 aa).

GTP is bound by residues 12-18 (GDEGKGK) and 40-42 (GHT). Catalysis depends on Asp-13, which acts as the Proton acceptor. Positions 13 and 40 each coordinate Mg(2+). IMP contacts are provided by residues 13-16 (DEGK), 38-41 (NAGH), Thr-130, Arg-144, Gln-225, Thr-240, and Arg-304. His-41 acts as the Proton donor in catalysis. 300 to 306 (ATTGRPR) lines the substrate pocket. GTP contacts are provided by residues Arg-306, 332 to 334 (KLD), and 414 to 416 (SIG).

It belongs to the adenylosuccinate synthetase family. Homodimer. It depends on Mg(2+) as a cofactor.

Its subcellular location is the cytoplasm. It catalyses the reaction IMP + L-aspartate + GTP = N(6)-(1,2-dicarboxyethyl)-AMP + GDP + phosphate + 2 H(+). It functions in the pathway purine metabolism; AMP biosynthesis via de novo pathway; AMP from IMP: step 1/2. Its function is as follows. Plays an important role in the de novo pathway of purine nucleotide biosynthesis. Catalyzes the first committed step in the biosynthesis of AMP from IMP. The polypeptide is Adenylosuccinate synthetase (Geobacter sulfurreducens (strain ATCC 51573 / DSM 12127 / PCA)).